We begin with the raw amino-acid sequence, 107 residues long: Nucleoid-associated protein YaaK (107 aa).

Positions 1-24 are disordered; sequence MRGGMGNMQKMMKQMQKMQKDMAK. Over residues 8 to 17 the composition is skewed to low complexity; the sequence is MQKMMKQMQK.

This sequence belongs to the YbaB/EbfC family. Homodimer.

It is found in the cytoplasm. The protein resides in the nucleoid. In terms of biological role, binds to DNA and alters its conformation. May be involved in regulation of gene expression, nucleoid organization and DNA protection. This chain is Nucleoid-associated protein YaaK (yaaK), found in Bacillus subtilis (strain 168).